A 723-amino-acid chain; its full sequence is Delta-like protein 1 (723 aa).

The first 17 residues, 1–17, serve as a signal peptide directing secretion; sequence MGSRCALALAVLSALLC. The Extracellular portion of the chain corresponds to 18–545; the sequence is QVWSSGVFEL…LEGQGGPFPW (528 aa). The DSL domain occupies 177-221; that stretch reads FVCDEHYYGEGCSVFCRPRDDAFGHFTCGERGEKVCNPGWKGPYC. 27 disulfide bridges follow: C179/C188, C192/C204, C212/C221, C226/C237, C230/C243, C245/C254, C257/C268, C263/C274, C276/C285, C292/C304, C298/C314, C316/C325, C332/C343, C337/C352, C354/C363, C370/C381, C375/C391, C393/C402, C409/C420, C414/C429, C431/C440, C447/C458, C452/C467, C469/C478, C485/C496, C490/C505, and C507/C516. EGF-like domains lie at 226-254, 257-285, and 292-325; these read CLPGCDEQHGFCDKPGECKCRVGWQGRYC, CIRYPGCLHGTCQQPWQCNCQEGWGGLFC, and CTHHKPCKNGATCTNTGQGSYTCSCRPGYTGATC. The EGF-like 4; calcium-binding domain maps to 332 to 363; sequence CDPSPCKNGGSCTDLENSYSCTCPPGFYGKIC. EGF-like domains follow at residues 370–402 and 409–440; these read CADGPCFNGGRCSDSPDGGYSCRCPVGYSGFNC and CSSSPCSNGAKCVDLGDAYLCRCQAGFSGRHC. Residues 447–478 enclose the EGF-like 7; calcium-binding domain; the sequence is CASSPCANGGTCRDGVNDFSCTCPPGYTGRNC. N477 carries N-linked (GlcNAc...) asparagine glycosylation. The EGF-like 8 domain occupies 485 to 516; sequence CEHAPCHNGATCHERGHRYVCECARGYGGPNC. The chain crosses the membrane as a helical span at residues 546-568; sequence VAVCAGVILVLMLLLGCAAVVVC. The Cytoplasmic segment spans residues 569–723; the sequence is VRLRLQKHRP…KDECVIATEV (155 aa). K613 participates in a covalent cross-link: Glycyl lysine isopeptide (Lys-Gly) (interchain with G-Cter in ubiquitin). Over residues 653-664 the composition is skewed to basic and acidic residues; it reads AVRDAHSKRDTK. Positions 653–702 are disordered; sequence AVRDAHSKRDTKCQPQGSSGEEKGTPTTLRGGEASERKRPDSGCSTSKDT. S694 carries the phosphoserine; by PKB modification. Phosphoserine is present on S697. Positions 720–723 are interaction with MAGI1; it reads ATEV.

Homodimer. Interacts with TJP1. Interacts with MAGI1 (via PDZ domain); forms a complex with CTNNB1 and CDH2 and promotes recruitment to the adherens junction and stabilization on the cell surface. Interacts with PSEN1; undergoes a presenilin-dependent gamma-secretase cleavage that releases a Dll1-intracellular form. Interacts with MFAP5. Interacts with MIB1. Interacts with NEURL1B; leads to ubiquitination. Interacts with NEURL1. Interacts with SYNJ2BP; enhances DLL1 protein stability, and promotes Notch signaling in endothelial cells. Interacts with MAGI1, MAGI2, MAGI3 and MPDZ. Interacts (via ubiquitin) with EPN1 (via IUM domain); binding with NOTCH1 attached to neighboring cell, promotes ligand ubiquitination and EPN1 interaction, leading to NECD transendocytosis and Notch signaling. Interacts with NOTCH1. Interacts with NOTCH2NLB; leading to promote Notch signaling pathway in a cell-autonomous manner through inhibition of cis DLL1-NOTCH2 interactions. Ubiquitinated by MIB (MIB1 or MIB2), leading to its endocytosis and subsequent degradation. Ubiquitinated; promotes recycling back to the plasma membrane and confers a strong affinity for NOTCH1. Multi-ubiquitination of Lys-613 by MIB1 promotes both cis and trans-interaction with NOTCH1, as well as activation of Notch signaling. Ubiquitinated by NEURL1B. Post-translationally, phosphorylated in a membrane association-dependent manner. Phosphorylation at Ser-697 requires the presence of Ser-694, whereas phosphorylation at Ser-694 occurs independently of the other site. Phosphorylation is required for full ligand activity in vitro and affects surface presentation, ectodomain shedding, and endocytosis. In terms of processing, O-fucosylated. Can be elongated to a disaccharide by MFNG. As to expression, expressed in heart and pancreas, with lower expression in brain and muscle and almost no expression in placenta, lung, liver and kidney.

It is found in the apical cell membrane. Its subcellular location is the cell junction. It localises to the adherens junction. The protein localises to the membrane raft. Transmembrane ligand protein of NOTCH1, NOTCH2 and NOTCH3 receptors that binds the extracellular domain (ECD) of Notch receptor in a cis and trans fashion manner. Following transinteraction, ligand cells produce mechanical force that depends of a clathrin-mediated endocytosis, requiring ligand ubiquitination, EPN1 interaction, and actin polymerisation; these events promote Notch receptor extracellular domain (NECD) transendocytosis and triggers Notch signaling through induction of cleavage, hyperphosphorylation, and nuclear accumulation of the intracellular domain of Notch receptors (NICD). Is required for embryonic development and maintenance of adult stem cells in many different tissues and immune systeme; the DLL1-induced Notch signaling is mediated through an intercellular communication that regulates cell lineage, cell specification, cell patterning and morphogenesis through effects on differentiation and proliferation. Plays a role in brain development at different level, namely by regulating neuronal differentiation of neural precursor cells via cell-cell interaction, most likely through the lateral inhibitory system in an endogenous level dependent-manner. During neocortex development, Dll1-Notch signaling transmission is mediated by dynamic interactions between intermediate neurogenic progenitors and radial glia; the cell-cell interactions are mediated via dynamic and transient elongation processes, likely to reactivate/maintain Notch activity in neighboring progenitors, and coordinate progenitor cell division and differentiation across radial and zonal boundaries. During cerebellar development, regulates Bergmann glial monolayer formation and its morphological maturation through a Notch signaling pathway. At the retina and spinal cord level, regulates neurogenesis by preventing the premature differentiation of neural progenitors and also by maintaining progenitors in spinal cord through Notch signaling pathway. Also controls neurogenesis of the neural tube in a progenitor domain-specific fashion along the dorsoventral axis. Maintains quiescence of neural stem cells and plays a role as a fate determinant that segregates asymmetrically to one daughter cell during neural stem cells mitosis, resulting in neuronal differentiation in Dll1-inheriting cell. Plays a role in immune systeme development, namely the development of all T-cells and marginal zone (MZ) B-cells. Blocks the differentiation of progenitor cells into the B-cell lineage while promoting the emergence of a population of cells with the characteristics of a T-cell/NK-cell precursor. Also plays a role during muscle development. During early development, inhibits myoblasts differentiation from the medial dermomyotomal lip and later regulates progenitor cell differentiation. Directly modulates cell adhesion and basal lamina formation in satellite cells through Notch signaling. Maintains myogenic progenitors pool by suppressing differentiation through down-regulation of MYOD1 and is required for satellite cell homing and PAX7 expression. During craniofacial and trunk myogenesis suppresses differentiation of cranial mesoderm-derived and somite-derived muscle via MYOD1 regulation but in cranial mesoderm-derived progenitors, is neither required for satellite cell homing nor for PAX7 expression. Also plays a role during pancreatic cell development. During type B pancreatic cell development, may be involved in the initiation of proximodistal patterning in the early pancreatic epithelium. Stimulates multipotent pancreatic progenitor cells proliferation and pancreatic growth by maintaining HES1 expression and PTF1A protein levels. During fetal stages of development, is required to maintain arterial identity and the responsiveness of arterial endothelial cells for VEGFA through regulation of KDR activation and NRP1 expression. Controls sprouting angiogenesis and subsequent vertical branch formation through regulation on tip cell differentiation. Negatively regulates goblet cell differentiation in intestine and controls secretory fat commitment through lateral inhibition in small intestine. Plays a role during inner ear development; negatively regulates auditory hair cell differentiation. Plays a role during nephron development through Notch signaling pathway. Regulates growth, blood pressure and energy homeostasis. This chain is Delta-like protein 1, found in Homo sapiens (Human).